The sequence spans 387 residues: MSNYLFTSESVSEGHPDKVADQISDAILDAILQQDPHARVACETMCSTGLIVLSGEITTHATIDYNVIPRDTVREIGYTSSEIGFDASTCAVLTAFNKQSPDIALGVNRSKEEEMDQGAGDQGLMFGYACDETPQLMPLPIYYAHRLVEQQAKLRKSGQLSWLRPDAKSQVSVRYIDGKPKNIETVVISTQHDPDISNGDLFEGVVEEIIKPVLPAEMLSSDIRYLVNPTGRFVVGGPMGDCGLTGRKIIVDTYGGTAHHGGGAFSGKDPSKVDRSAAYAARYVAKNIVAAGLARKCEVQVAYAIGVAKPVSLMLETFGTGKVSDEKLAELITRNFDLRPRAIIHELNLLRPIYSKTAAYGHFGREEPSFTWEKTDIAEQLIADAGI.

Position 15 (H15) interacts with ATP. D17 is a binding site for Mg(2+). E43 is a binding site for K(+). The L-methionine site is built by E56 and Q99. The flexible loop stretch occupies residues 99 to 109 (QSPDIALGVNR). Residues 166–168 (DAK), 232–233 (RF), D241, 247–248 (RK), A264, and K268 each bind ATP. D241 is an L-methionine binding site. K272 contacts L-methionine.

Belongs to the AdoMet synthase family. Homotetramer; dimer of dimers. The cofactor is Mg(2+). K(+) is required as a cofactor.

It is found in the cytoplasm. The enzyme catalyses L-methionine + ATP + H2O = S-adenosyl-L-methionine + phosphate + diphosphate. It functions in the pathway amino-acid biosynthesis; S-adenosyl-L-methionine biosynthesis; S-adenosyl-L-methionine from L-methionine: step 1/1. Catalyzes the formation of S-adenosylmethionine (AdoMet) from methionine and ATP. The overall synthetic reaction is composed of two sequential steps, AdoMet formation and the subsequent tripolyphosphate hydrolysis which occurs prior to release of AdoMet from the enzyme. This chain is S-adenosylmethionine synthase, found in Nitrosomonas eutropha (strain DSM 101675 / C91 / Nm57).